We begin with the raw amino-acid sequence, 452 residues long: Nuclear distribution protein PAC1 (452 aa).

One can recognise a LisH domain in the interval 12 to 44 (QKDELHKAILAYFSASGLSNTGAALREELGVGD). The stretch at 64 to 91 (TGVLRLQKKIMELESRLSSLQSELDSAT) forms a coiled coil. 8 WD repeats span residues 117-158 (SHRN…RTVK), 160-200 (HTKA…KNIR), 204-245 (GHDH…CVKT), 248-287 (GHSD…HKAT), 290-350 (GHEH…LKTL), 352-391 (GHDN…RCVK), 396-435 (AHSH…INVR), and 437-452 (VIAT…VFAS).

It belongs to the WD repeat LIS1/nudF family. Self-associates. Interacts with NDL1 and dynein.

The protein localises to the cytoplasm. Its subcellular location is the cytoskeleton. It localises to the spindle pole. Positively regulates the activity of the minus-end directed microtubule motor protein dynein. May enhance dynein-mediated microtubule sliding by targeting dynein to the microtubule plus end. Required for nuclear migration during vegetative growth as well as development. Required for retrograde early endosome (EE) transport from the hyphal tip. Required for localization of dynein to the mitotic spindle poles. Recruits additional proteins to the dynein complex at SPBs. The polypeptide is Nuclear distribution protein PAC1 (Tuber melanosporum (strain Mel28) (Perigord black truffle)).